Here is a 686-residue protein sequence, read N- to C-terminus: Cation channel sperm-associated protein 1 (686 aa).

Over residues 1-15 (MDQSSRRDESYHETH) the composition is skewed to basic and acidic residues. Disordered stretches follow at residues 1–57 (MDQS…QQPY), 97–177 (TLPN…NRDH), 207–271 (DHHH…KSTA), and 289–318 (QSRE…RAHK). The Cytoplasmic portion of the chain corresponds to 1 to 351 (MDQSSRRDES…QMILSLTQSL (351 aa)). Residues 25-35 (SHPHPHPHPTL) show a composition bias toward basic residues. The segment covering 128–142 (DPNHHPHQDDPHRPS) has biased composition (basic and acidic residues). Residues 147-160 (HPSSTGSHQGTTHQ) show a composition bias toward polar residues. 2 stretches are compositionally biased toward basic residues: residues 211 to 229 (EGHH…KEQR) and 235 to 244 (HMHHHIHHRS). The span at 245–271 (PSASQLSHKSHSTLATSPSHVGSKSTA) shows a compositional bias: polar residues. Basic residues predominate over residues 308–318 (QKRKKAQRAHK). A helical transmembrane segment spans residues 352–373 (GFETFIFIVVCLNTVILVAQTF). Residues 374–382 (TELEIRGEW) are Extracellular-facing. A helical transmembrane segment spans residues 383–404 (YFMVLDSIFLSIYVLEAVLKLI). The Cytoplasmic segment spans residues 405-412 (ALGLEYFY). A helical transmembrane segment spans residues 413–435 (DPWNNLDFFIMVMAVLDFVLLQI). Over 436–446 (NSLSYSFYNHS) the chain is Extracellular. Residues 447-469 (LFRILKVFKSMRALRAIRVLRRL) traverse the membrane as a helical segment. Over 470-487 (SILTSLHEVAGTLSGSLP) the chain is Cytoplasmic. A helical transmembrane segment spans residues 488-510 (SITAILTLMFTCLFLFSVVLRAL). Residues 511–521 (FQDSDPKRFQN) lie on the Extracellular side of the membrane. The segment at residues 522–534 (IFTTLFTLFTMLT) is an intramembrane region (helical; Pore-forming). The Extracellular portion of the chain corresponds to 535–551 (LDDWSLIYIDNRAQGAW). The chain crosses the membrane as a helical span at residues 552-577 (YIIPILMIYIVIQYFIFLNLVIAVLV). At 578–686 (DNFQMALLKG…FEAGDDDYGK (109 aa)) the chain is on the cytoplasmic side.

The protein belongs to the cation channel sperm-associated (TC 1.A.1.19) family. In terms of assembly, component of the CatSper complex or CatSpermasome composed of the core pore-forming members CATSPER1, CATSPER2, CATSPER3 and CATSPER4 as well as auxiliary members CATSPERB, CATSPERG2, CATSPERD, CATSPERE, CATSPERZ, C2CD6/CATSPERT, SLCO6C1, TMEM249, TMEM262 and EFCAB9. HSPA1 may be an additional auxiliary complex member. The core complex members CATSPER1, CATSPER2, CATSPER3 and CATSPER4 form a heterotetrameric channel. The auxiliary CATSPERB, CATSPERG2, CATSPERD and CATSPERE subunits form a pavilion-like structure over the pore which stabilizes the complex through interactions with CATSPER4, CATSPER3, CATSPER1 and CATSPER2 respectively. SLCO6C1 interacts with CATSPERE, and TMEM262/CATSPERH interacts with CATSPERB, further stabilizing the complex. C2CD6/CATSPERT interacts at least with CATSPERD and is required for targeting the CatSper complex in the flagellar membrane. Interacts with Ca(v)3.3/CACNA1I, leading to suppression of T-type calcium channel activity. In terms of tissue distribution, testis-specific.

The protein resides in the cell projection. It is found in the cilium. It localises to the flagellum membrane. The enzyme catalyses Ca(2+)(in) = Ca(2+)(out). With respect to regulation, activated by intracellular alkalinization. In contrast to the human ortholog, not activated by progesterone. Its function is as follows. Pore-forming subunit of the CatSper complex, a sperm-specific voltage-gated calcium channel that plays a central role in sperm cell hyperactivation. Controls calcium entry to mediate the hyperactivated motility, a step needed for sperm motility which is essential late in the preparation of sperm for fertilization. In Mus musculus (Mouse), this protein is Cation channel sperm-associated protein 1 (Catsper1).